Consider the following 428-residue polypeptide: Glutamate-1-semialdehyde 2,1-aminomutase (428 aa).

Lys265 is subject to N6-(pyridoxal phosphate)lysine.

It belongs to the class-III pyridoxal-phosphate-dependent aminotransferase family. HemL subfamily. As to quaternary structure, homodimer. It depends on pyridoxal 5'-phosphate as a cofactor.

The protein localises to the cytoplasm. The catalysed reaction is (S)-4-amino-5-oxopentanoate = 5-aminolevulinate. The protein operates within porphyrin-containing compound metabolism; protoporphyrin-IX biosynthesis; 5-aminolevulinate from L-glutamyl-tRNA(Glu): step 2/2. In Shewanella frigidimarina (strain NCIMB 400), this protein is Glutamate-1-semialdehyde 2,1-aminomutase.